The following is a 403-amino-acid chain: MASRSLGGLSGSRGGGKKSLSARNAAVERRNLITVCRFSVKTLIDRSCFETIDDSSPEFNNFAAVLEQILSHRLKGQVTWFGYESPRSFWDYIRVACRKVSQNCICSIENMENVSSSRAKGRAWIRVALMEKHLSEYISTALRDFKTTRRFYEEGAIVLGEEANMLAGMLLGLNAIDFSFCLKGEGLDGTFPAVIDYTPYLKFEQSSDSISSDEEELRTFGSSDSEGSTPENVGPPLILDENSWFNKCKRVRQKYQLTLEQKGYLEELLRLRENQLSESVSQNKILLQRIEDSDLAHKLEKEQLEYIIVELQDQLKSYQSLDQLSAEVSLSQASLDPGHSQEGDGKQDSLNFIGEGKEDTPSLLGLCGSLTSVASYKSLTSLKSNDCLASPTTEITSPGLTPS.

Residues 1-20 (MASRSLGGLSGSRGGGKKSL) form a disordered region. Position 13 is an omega-N-methylarginine (Arg13). Residues 53–185 (DDSSPEFNNF…IDFSFCLKGE (133 aa)) enclose the RUN domain. Positions 207–232 (SDSISSDEEELRTFGSSDSEGSTPEN) are disordered. Residues Ser211 and Ser212 each carry the phosphoserine modification. Residues 220–231 (FGSSDSEGSTPE) show a composition bias toward polar residues. Residues 296 to 321 (AHKLEKEQLEYIIVELQDQLKSYQSL) are a coiled coil.

This sequence belongs to the RUNDC3 family. Interacts with RAP2A.

The sequence is that of RUN domain-containing protein 3B (Rundc3b) from Rattus norvegicus (Rat).